A 65-amino-acid chain; its full sequence is Large ribosomal subunit protein bL35 (65 aa).

Belongs to the bacterial ribosomal protein bL35 family.

The sequence is that of Large ribosomal subunit protein bL35 from Karelsulcia muelleri (strain GWSS) (Sulcia muelleri).